The sequence spans 332 residues: UPF0194 membrane protein YbhG (332 aa).

An N-terminal signal peptide occupies residues 1–16 (MMKKPVVIGLAVVVLA). Residues 141–210 (RTISANDLEN…NLQDSTLIAP (70 aa)) are a coiled coil.

It belongs to the UPF0194 family.

Its subcellular location is the periplasm. The sequence is that of UPF0194 membrane protein YbhG (ybhG) from Shigella flexneri.